A 255-amino-acid chain; its full sequence is MGRCGRSNDGVIGGVRPYVRSPVPRLRWTPELHRSFVHAVDLLGGQYKATPKLVLKIMDVKGLTISHVKSHLQMYRGSRITLLGKPEESSSPSSRRRRRQDNEEDHLHDNLSVHARNDCLLGFHSFNFREQTSATDNDDDDFLNIMNMERTKTFAGNGESIKFQSHHSLEAENTKNIWKNTWRENEHEEEEELSLSLSLNHPHNHQQRWKSNASSSLSETSEAVSSSSGPFIFRDCFASSKIDLNLNLSFSLLHS.

The 61-residue stretch at 20–80 (RSPVPRLRWT…HLQMYRGSRI (61 aa)) folds into the HTH myb-type domain. The segment at residues 51 to 76 (PKLVLKIMDVKGLTISHVKSHLQMYR) is a DNA-binding region (H-T-H motif). Residues 80–110 (ITLLGKPEESSSPSSRRRRRQDNEEDHLHDN) are disordered.

The protein resides in the nucleus. Putative transcription factor. The protein is Putative Myb family transcription factor At1g14600 of Arabidopsis thaliana (Mouse-ear cress).